We begin with the raw amino-acid sequence, 392 residues long: Probable inactive serine/threonine-protein kinase DDB_G0280855 (392 aa).

The region spanning 46 to 349 is the Protein kinase domain; that stretch reads ITKKTIYACD…IERIIQHPYF (304 aa). ATP is bound by residues 52 to 60 and Lys-75; that span reads YACDINGTM.

Belongs to the protein kinase superfamily. CMGC Ser/Thr protein kinase family. MAP kinase subfamily.

The polypeptide is Probable inactive serine/threonine-protein kinase DDB_G0280855 (Dictyostelium discoideum (Social amoeba)).